Here is a 321-residue protein sequence, read N- to C-terminus: Methionyl-tRNA formyltransferase (321 aa).

Gly111 to Pro114 is a binding site for (6S)-5,6,7,8-tetrahydrofolate.

Belongs to the Fmt family.

It catalyses the reaction L-methionyl-tRNA(fMet) + (6R)-10-formyltetrahydrofolate = N-formyl-L-methionyl-tRNA(fMet) + (6S)-5,6,7,8-tetrahydrofolate + H(+). Functionally, attaches a formyl group to the free amino group of methionyl-tRNA(fMet). The formyl group appears to play a dual role in the initiator identity of N-formylmethionyl-tRNA by promoting its recognition by IF2 and preventing the misappropriation of this tRNA by the elongation apparatus. In Chlamydia abortus (strain DSM 27085 / S26/3) (Chlamydophila abortus), this protein is Methionyl-tRNA formyltransferase.